A 346-amino-acid chain; its full sequence is MKTDDFDFSLPNELIAQLPLANRADSRMLYINSRQSDLRDAAFKDLPAYLKQGDVIVFNNTRVVKARLAGFKSTGGKVEVMIERILGTHQARALIRASHAPAIGSTLLLENAITVQVEAREQDIYTLRFIHSQPLIELLDQYGHTPLPPYIGRIATASDESRYQTVFAQETGAVAAPTAGLHFDETMLTTLQTLGIKIAWVTLHVGAGTFQPVRVENINQHIMHTEQYHIPTETIEIIRRCKAGGGSVLAVGTTSLRALEASALIGDGELVAGSNETNLFITPGFQFRVVDRLLTNFHLPRSTLLMLVSAFAGIETIRHAYQHAVNNHYRFFSYGDAMLIEGDSRS.

Belongs to the QueA family. In terms of assembly, monomer.

The protein resides in the cytoplasm. It catalyses the reaction 7-aminomethyl-7-carbaguanosine(34) in tRNA + S-adenosyl-L-methionine = epoxyqueuosine(34) in tRNA + adenine + L-methionine + 2 H(+). Its pathway is tRNA modification; tRNA-queuosine biosynthesis. Its function is as follows. Transfers and isomerizes the ribose moiety from AdoMet to the 7-aminomethyl group of 7-deazaguanine (preQ1-tRNA) to give epoxyqueuosine (oQ-tRNA). The protein is S-adenosylmethionine:tRNA ribosyltransferase-isomerase of Nitrosomonas eutropha (strain DSM 101675 / C91 / Nm57).